Reading from the N-terminus, the 171-residue chain is 6,7-dimethyl-8-ribityllumazine synthase (171 aa).

5-amino-6-(D-ribitylamino)uracil-binding positions include phenylalanine 24, alanine 58 to glutamate 60, and alanine 82 to isoleucine 84. Residue glutamate 87–threonine 88 participates in (2S)-2-hydroxy-3-oxobutyl phosphate binding. The active-site Proton donor is histidine 90. Asparagine 115 provides a ligand contact to 5-amino-6-(D-ribitylamino)uracil. Position 129 (arginine 129) interacts with (2S)-2-hydroxy-3-oxobutyl phosphate. The disordered stretch occupies residues alanine 150–alanine 171. A compositionally biased stretch (acidic residues) spans leucine 154–alanine 171.

It belongs to the DMRL synthase family.

The catalysed reaction is (2S)-2-hydroxy-3-oxobutyl phosphate + 5-amino-6-(D-ribitylamino)uracil = 6,7-dimethyl-8-(1-D-ribityl)lumazine + phosphate + 2 H2O + H(+). It functions in the pathway cofactor biosynthesis; riboflavin biosynthesis; riboflavin from 2-hydroxy-3-oxobutyl phosphate and 5-amino-6-(D-ribitylamino)uracil: step 1/2. In terms of biological role, catalyzes the formation of 6,7-dimethyl-8-ribityllumazine by condensation of 5-amino-6-(D-ribitylamino)uracil with 3,4-dihydroxy-2-butanone 4-phosphate. This is the penultimate step in the biosynthesis of riboflavin. This Burkholderia cenocepacia (strain HI2424) protein is 6,7-dimethyl-8-ribityllumazine synthase.